Consider the following 65-residue polypeptide: Large ribosomal subunit protein bL35 (65 aa).

Residues 30-65 form a disordered region; sequence AFRSHLAQNKSTKQKRQSKHGTFMHPTDYKRLKDLM. The segment covering 56-65 has biased composition (basic and acidic residues); the sequence is TDYKRLKDLM.

It belongs to the bacterial ribosomal protein bL35 family.

This Mycoplasma mobile (strain ATCC 43663 / 163K / NCTC 11711) (Mesomycoplasma mobile) protein is Large ribosomal subunit protein bL35.